Reading from the N-terminus, the 450-residue chain is Phosphoglucosamine mutase (450 aa).

Residue serine 101 is the Phosphoserine intermediate of the active site. Positions 101, 240, 242, and 244 each coordinate Mg(2+). Serine 101 is modified (phosphoserine).

The protein belongs to the phosphohexose mutase family. Mg(2+) is required as a cofactor. In terms of processing, activated by phosphorylation.

It carries out the reaction alpha-D-glucosamine 1-phosphate = D-glucosamine 6-phosphate. Its function is as follows. Catalyzes the conversion of glucosamine-6-phosphate to glucosamine-1-phosphate. This chain is Phosphoglucosamine mutase, found in Streptococcus pneumoniae serotype 19F (strain G54).